Reading from the N-terminus, the 573-residue chain is Globulin-1 S allele (573 aa).

A signal peptide (or 21) is located at residues Met-1–Ala-18. Residues Ala-19 to Asp-86 constitute a propeptide that is removed on maturation. Residues Glu-65 to Arg-102 are disordered. Cupin type-1 domains follow at residues Tyr-104–Glu-262 and Tyr-311–Asp-493. Residues Arg-288–Asp-315 form a disordered region. The N-linked (GlcNAc...) asparagine glycan is linked to Asn-349. Disordered regions lie at residues Pro-382–Gln-416 and Ser-498–Met-573. Residues Glu-390 to Glu-402 are compositionally biased toward basic and acidic residues. Positions Glu-403–Glu-413 are enriched in acidic residues. 2 stretches are compositionally biased toward basic and acidic residues: residues Glu-525 to Arg-542 and Arg-549 to Val-561.

This sequence belongs to the 7S seed storage protein family. Post-translationally, three protein-processing steps occur in the formation of the mature protein from the primary translation product.

In Zea mays (Maize), this protein is Globulin-1 S allele (GLB1).